Consider the following 346-residue polypeptide: uncharacterized protein (346 aa).

Belongs to the IIV-6 359L family.

This is an uncharacterized protein from Invertebrate iridescent virus 6 (IIV-6).